The chain runs to 281 residues: sn-glycerol-3-phosphate transport system permease protein UgpE (281 aa).

Transmembrane regions (helical) follow at residues 16-36, 85-105, 113-133, 142-162, 202-222, and 247-267; these read LILGIAVILFPLYVAFVAATL, FSITLGKITVSMLSAFAIVWF, FFWMIFITLMLPVEVRIFPTV, LDSYAGLTLPLMASATATFLF, ALFVITFIYGWNQYLWPLLII, and WNSVMAAMLLTLIPPVVIVLV. The ABC transmembrane type-1 domain maps to 77–268; that stretch reads LLNSFVMAFS…IPPVVIVLVM (192 aa).

Belongs to the binding-protein-dependent transport system permease family. UgpAE subfamily. In terms of assembly, the complex is composed of two ATP-binding proteins (UgpC), two transmembrane proteins (UgpA and UgpE) and a solute-binding protein (UgpB).

Its subcellular location is the cell inner membrane. Its function is as follows. Part of the ABC transporter complex UgpBAEC involved in sn-glycerol-3-phosphate (G3P) import. Probably responsible for the translocation of the substrate across the membrane. The sequence is that of sn-glycerol-3-phosphate transport system permease protein UgpE (ugpE) from Shigella dysenteriae serotype 1 (strain Sd197).